The following is a 395-amino-acid chain: S-adenosylmethionine synthase (395 aa).

H16 lines the ATP pocket. D18 lines the Mg(2+) pocket. E44 lines the K(+) pocket. L-methionine is bound by residues E57 and Q100. A flexible loop region spans residues 100–110; that stretch reads QSPDIAQGVDD. Residues 174-176, 241-242, D250, 256-257, A273, and K277 contribute to the ATP site; these read DAK, RF, and RK. D250 provides a ligand contact to L-methionine. An L-methionine-binding site is contributed by K281.

It belongs to the AdoMet synthase family. As to quaternary structure, homotetramer; dimer of dimers. Mg(2+) serves as cofactor. Requires K(+) as cofactor.

It is found in the cytoplasm. The catalysed reaction is L-methionine + ATP + H2O = S-adenosyl-L-methionine + phosphate + diphosphate. The protein operates within amino-acid biosynthesis; S-adenosyl-L-methionine biosynthesis; S-adenosyl-L-methionine from L-methionine: step 1/1. Functionally, catalyzes the formation of S-adenosylmethionine (AdoMet) from methionine and ATP. The overall synthetic reaction is composed of two sequential steps, AdoMet formation and the subsequent tripolyphosphate hydrolysis which occurs prior to release of AdoMet from the enzyme. This chain is S-adenosylmethionine synthase, found in Levilactobacillus brevis (strain ATCC 367 / BCRC 12310 / CIP 105137 / JCM 1170 / LMG 11437 / NCIMB 947 / NCTC 947) (Lactobacillus brevis).